Reading from the N-terminus, the 401-residue chain is Exodeoxyribonuclease 7 large subunit (401 aa).

It belongs to the XseA family. As to quaternary structure, heterooligomer composed of large and small subunits.

It is found in the cytoplasm. It catalyses the reaction Exonucleolytic cleavage in either 5'- to 3'- or 3'- to 5'-direction to yield nucleoside 5'-phosphates.. Functionally, bidirectionally degrades single-stranded DNA into large acid-insoluble oligonucleotides, which are then degraded further into small acid-soluble oligonucleotides. The protein is Exodeoxyribonuclease 7 large subunit of Thermoanaerobacter pseudethanolicus (strain ATCC 33223 / 39E) (Clostridium thermohydrosulfuricum).